The sequence spans 397 residues: Tryptophan synthase beta chain (397 aa).

K87 carries the N6-(pyridoxal phosphate)lysine modification.

This sequence belongs to the TrpB family. In terms of assembly, tetramer of two alpha and two beta chains. Pyridoxal 5'-phosphate is required as a cofactor.

The catalysed reaction is (1S,2R)-1-C-(indol-3-yl)glycerol 3-phosphate + L-serine = D-glyceraldehyde 3-phosphate + L-tryptophan + H2O. Its pathway is amino-acid biosynthesis; L-tryptophan biosynthesis; L-tryptophan from chorismate: step 5/5. In terms of biological role, the beta subunit is responsible for the synthesis of L-tryptophan from indole and L-serine. The protein is Tryptophan synthase beta chain of Escherichia coli O127:H6 (strain E2348/69 / EPEC).